A 72-amino-acid chain; its full sequence is Translation initiation factor IF-1 (72 aa).

The S1-like domain occupies 1-72 (MSKQSSIEQD…TKGRIVFRYK (72 aa)).

It belongs to the IF-1 family. Component of the 30S ribosomal translation pre-initiation complex which assembles on the 30S ribosome in the order IF-2 and IF-3, IF-1 and N-formylmethionyl-tRNA(fMet); mRNA recruitment can occur at any time during PIC assembly.

Its subcellular location is the cytoplasm. One of the essential components for the initiation of protein synthesis. Stabilizes the binding of IF-2 and IF-3 on the 30S subunit to which N-formylmethionyl-tRNA(fMet) subsequently binds. Helps modulate mRNA selection, yielding the 30S pre-initiation complex (PIC). Upon addition of the 50S ribosomal subunit IF-1, IF-2 and IF-3 are released leaving the mature 70S translation initiation complex. In Cytophaga hutchinsonii (strain ATCC 33406 / DSM 1761 / CIP 103989 / NBRC 15051 / NCIMB 9469 / D465), this protein is Translation initiation factor IF-1.